The sequence spans 367 residues: MSLSRVSVTAVRNLHPVTFSPSPRINLLYGANGSGKTSVLEAIHLLGLARSFRSARLLPVIQYEQLACTVFGQVELAQGGHSSLGISRDRQGEFQIRIDGQNARSAAQLAEILPLQLINPDSFRLLEGAPKIRRQFLDWGVFHVEPRFMSTWQRLQKALRQRNSWLRHGTLDAASQAAWDRELCQASAEIDEYRRAYIKALKPVFERTLGELLQLEGLTLSYYRGWDKDRELSEVLATALHRDQQMGHTQAGPQRADLRLRLGGHNAADILSRGQQKLVVCALRIAQGHLVSQARRGQCIYLVDDLPSELDEQHRRALCRLLEDLRCQVFITCVDHELLREGWQTETPVALFHVEQGRITQTHDHRE.

30 to 37 serves as a coordination point for ATP; that stretch reads GANGSGKT.

The protein belongs to the RecF family.

It localises to the cytoplasm. Functionally, the RecF protein is involved in DNA metabolism; it is required for DNA replication and normal SOS inducibility. RecF binds preferentially to single-stranded, linear DNA. It also seems to bind ATP. The sequence is that of DNA replication and repair protein RecF from Pseudomonas fluorescens (strain ATCC BAA-477 / NRRL B-23932 / Pf-5).